The primary structure comprises 126 residues: Holo-[acyl-carrier-protein] synthase (126 aa).

Positions 8 and 60 each coordinate Mg(2+).

The protein belongs to the P-Pant transferase superfamily. AcpS family. Mg(2+) serves as cofactor.

The protein localises to the cytoplasm. The enzyme catalyses apo-[ACP] + CoA = holo-[ACP] + adenosine 3',5'-bisphosphate + H(+). In terms of biological role, transfers the 4'-phosphopantetheine moiety from coenzyme A to a Ser of acyl-carrier-protein. The protein is Holo-[acyl-carrier-protein] synthase of Ehrlichia canis (strain Jake).